Reading from the N-terminus, the 259-residue chain is Alpha-acetolactate decarboxylase (259 aa).

This sequence belongs to the alpha-acetolactate decarboxylase family.

It catalyses the reaction (2S)-2-acetolactate + H(+) = (R)-acetoin + CO2. Its pathway is polyol metabolism; (R,R)-butane-2,3-diol biosynthesis; (R,R)-butane-2,3-diol from pyruvate: step 2/3. In terms of biological role, converts acetolactate into acetoin, which can be excreted by the cells. This may be a mechanism for controlling the internal pH of cells in the stationary stage. This is Alpha-acetolactate decarboxylase (budA) from Raoultella terrigena (Klebsiella terrigena).